We begin with the raw amino-acid sequence, 125 residues long: Small ribosomal subunit protein uS12m (125 aa).

The protein belongs to the universal ribosomal protein uS12 family. As to quaternary structure, component of the mitochondrial ribosome small subunit.

The protein resides in the mitochondrion. In terms of biological role, protein S12 is involved in the translation initiation step. The protein is Small ribosomal subunit protein uS12m (RPS12) of Arabidopsis thaliana (Mouse-ear cress).